The chain runs to 555 residues: Sesquiterpene synthase 31 (555 aa).

Residues D308, D312, D451, T455, and E459 each contribute to the Mg(2+) site. Residues 308–312 carry the DDXXD motif motif; that stretch reads DDTFD.

The protein belongs to the terpene synthase family. Tpsa subfamily. The cofactor is Mg(2+). It depends on Mn(2+) as a cofactor. In terms of tissue distribution, expressed in stem and leaf trichomes. Detected in roots, fruits and flowers.

The protein resides in the cytoplasm. It catalyses the reaction (2E,6E)-farnesyl diphosphate = viridiflorene + diphosphate. It participates in secondary metabolite biosynthesis; terpenoid biosynthesis. In terms of biological role, sesquiterpene synthase involved in the production of viridiflorene from (E,E)-farnesyl diphosphate (FPP). Has no activity with (Z,Z)-FPP. Can act with a low efficiency as a monoterpene synthase with geranyl diphosphate as substrate. In Solanum lycopersicum (Tomato), this protein is Sesquiterpene synthase 31.